Here is a 737-residue protein sequence, read N- to C-terminus: Acetylcholinesterase (737 aa).

A signal peptide spans 1 to 38 (MEIRGLLMGRLRLGRRMVPLGLLGVTALLLILPPFALV). Residues 141–168 (HSGATPRRRGLTRRESNSDANDNDPLVV) are disordered. An N-linked (GlcNAc...) asparagine glycan is attached at asparagine 220. A disulfide bridge connects residues cysteine 228 and cysteine 255. Catalysis depends on serine 360, which acts as the Acyl-ester intermediate. Cysteine 414 and cysteine 427 form a disulfide bridge. Residues glutamate 486 and histidine 600 each act as charge relay system in the active site. Residues cysteine 562 and cysteine 683 are joined by a disulfide bond. N-linked (GlcNAc...) asparagine glycosylation is present at asparagine 670.

The protein belongs to the type-B carboxylesterase/lipase family.

Its subcellular location is the synapse. The catalysed reaction is acetylcholine + H2O = choline + acetate + H(+). Its function is as follows. Rapidly hydrolyzes choline released into the synapse. This is Acetylcholinesterase (Ace) from Anopheles gambiae (African malaria mosquito).